The sequence spans 347 residues: Autoinducer 2 import system permease protein LsrC (347 aa).

The next 9 membrane-spanning stretches (helical) occupy residues 14-34 (LLAI…YLSV), 39-59 (MVFS…MVML), 72-92 (GMCA…PVAC), 93-113 (LATL…VAWL), 115-135 (IPAI…MLLW), 155-175 (VFLG…LMAW), 213-233 (LNGG…GFIP), 249-269 (VLGG…ILGA), and 284-304 (IPAW…LVFD).

It belongs to the binding-protein-dependent transport system permease family. AraH/RbsC subfamily. As to quaternary structure, the complex is composed of two ATP-binding proteins (LsrA), two transmembrane proteins (LsrC and LsrD) and a solute-binding protein (LsrB).

It localises to the cell inner membrane. Part of the ABC transporter complex LsrABCD involved in autoinducer 2 (AI-2) import. Probably responsible for the translocation of the substrate across the membrane. The sequence is that of Autoinducer 2 import system permease protein LsrC (lsrC) from Salmonella typhi.